Consider the following 533-residue polypeptide: Ribonuclease III domain-containing protein RNC1, chloroplastic (533 aa).

The transit peptide at 1–30 directs the protein to the chloroplast; that stretch reads MAPPAMAFQALALGPLPLPLPAARRRRRVR. Disordered stretches follow at residues 31-57 and 66-85; these read VLAVAADHTPPPPPSPSSPPEPANSPS and RKKAVSPKKKHPPRRFILKP. The segment covering 39-53 has biased composition (pro residues); it reads TPPPPPSPSSPPEPA. Residues 69 to 82 are compositionally biased toward basic residues; it reads AVSPKKKHPPRRFI. RNase III domains are found at residues 164 to 279 and 411 to 511; these read LLYL…LCFG and EHPR…CVYG.

As to quaternary structure, interacts with RNA. Part of large ribonucleo-protein particles that contain CAF1 and/or CAF2.

The protein localises to the plastid. The protein resides in the chloroplast. Its function is as follows. Binds specific group II introns in chloroplasts and facilitates their splicing. Acts on both subgroup IIA and subgroup IIB introns. The substrates of the subgroup II also require the CRM domain proteins CAF1 or CAF2. Binds both single-stranded and double-stranded RNA non-specifically, but lacks endonuclease activity. Required for plastid ribosome biogenesis. This Oryza sativa subsp. japonica (Rice) protein is Ribonuclease III domain-containing protein RNC1, chloroplastic.